Reading from the N-terminus, the 132-residue chain is U-scoloptoxin(11)-Sa1a (132 aa).

Residues 1-19 (MIRFFAFVLFFATQELILC) form the signal peptide.

It belongs to the scoloptoxin-11 family. Post-translationally, contains 5 disulfide bonds. Expressed by the venom gland.

It is found in the secreted. The chain is U-scoloptoxin(11)-Sa1a from Scolopendra alternans (Florida Keys giant centipede).